The following is a 426-amino-acid chain: Histidine--tRNA ligase (426 aa).

This sequence belongs to the class-II aminoacyl-tRNA synthetase family.

The protein localises to the cytoplasm. It catalyses the reaction tRNA(His) + L-histidine + ATP = L-histidyl-tRNA(His) + AMP + diphosphate + H(+). The sequence is that of Histidine--tRNA ligase (hisS) from Thermoplasma volcanium (strain ATCC 51530 / DSM 4299 / JCM 9571 / NBRC 15438 / GSS1).